Here is a 108-residue protein sequence, read N- to C-terminus: UPF0235 protein RPB_0109 (108 aa).

It belongs to the UPF0235 family.

In Rhodopseudomonas palustris (strain HaA2), this protein is UPF0235 protein RPB_0109.